The following is a 494-amino-acid chain: Alpha-amylase-related protein (494 aa).

The first 20 residues, 1–20, serve as a signal peptide directing secretion; that stretch reads MIKFALALTLCLAGASLSLA. Position 21 is a pyrrolidone carboxylic acid (Gln-21). A disulfide bridge links Cys-48 with Cys-104. The Ca(2+) site is built by Asn-118, Gln-169, and Asp-178. Residues Cys-157 and Cys-171 are joined by a disulfide bond. Arg-206 serves as a coordination point for chloride. Residue Asp-208 is the Nucleophile of the active site. Position 212 (His-212) interacts with Ca(2+). Glu-245 (proton donor) is an active-site residue. 2 residues coordinate chloride: Asn-308 and Arg-343. Intrachain disulfides connect Cys-376–Cys-382, Cys-418–Cys-441, and Cys-448–Cys-460.

It belongs to the glycosyl hydrolase 13 family. In terms of assembly, monomer. It depends on Ca(2+) as a cofactor. The cofactor is chloride.

It localises to the secreted. The catalysed reaction is Endohydrolysis of (1-&gt;4)-alpha-D-glucosidic linkages in polysaccharides containing three or more (1-&gt;4)-alpha-linked D-glucose units.. This chain is Alpha-amylase-related protein (Amyrel), found in Drosophila bakoue (Fruit fly).